A 298-amino-acid polypeptide reads, in one-letter code: DDRGK domain-containing protein 1 (298 aa).

Residues 1–21 form a helical membrane-spanning segment; that stretch reads MDIVLYFVAVPILIVLIVSAV. Topologically, residues 22–298 are cytoplasmic; sequence KVRGKTEEDN…NLIPEIHNTA (277 aa). A disordered region spans residues 71–149; that stretch reads NSAYREAADN…EERRKEDKKE (79 aa). Residues 82-94 show a composition bias toward acidic residues; that stretch reads SPVEVEEEYEEAE. Residues 110–149 are compositionally biased toward basic and acidic residues; the sequence is KLEEKQAKRAQREAELEEREERKRTQELREEERRKEDKKE. Residues 181–195 carry the UFM1-interacting motif (UFIM) motif; that stretch reads SFVVEEQGEADELTE. Residues 215-259 form the PCI domain; that stretch reads VLLEDLASHFGLRTQDAISRLQDLLSDGSITGVIDDRGKFIFITP.

It belongs to the DDRGK1 family. As to quaternary structure, component of the UFM1 ribosome E3 ligase (UREL) complex, composed of ufl1, ddrgk1 and cdk5rap3.

It localises to the endoplasmic reticulum membrane. Functionally, component of the UFM1 ribosome E3 ligase (UREL) complex, a multiprotein complex that catalyzes ufmylation of endoplasmic reticulum-docked proteins. The UREL complex plays a key role in ribosome recycling by mediating mono-ufmylation of the RPL26/uL24 subunit of the 60S ribosome following ribosome dissociation: ufmylation weakens the junction between post-termination 60S subunits and SEC61 translocons, promoting release and recycling of the large ribosomal subunit from the endoplasmic reticulum membrane. Ufmylation of RPL26/uL24 and subsequent 60S ribosome recycling either take place after normal termination of translation or after ribosome stalling during cotranslational translocation at the endoplasmic reticulum. Within the UREL complex, DDRGK1 tethers the complex to the endoplasmic reticulum membrane to restrict its activity to endoplasmic reticulum-docked ribosomes and acts as an ufmylation 'reader': following RPL26/uL24 ufmylation, DDRGK1 specifically binds to ufmylated RPL26/uL24 via its UFIM motif, resulting in stable association between the 60S ribosome and the UREL complex, followed by dissociation of the 60S ribosome subunit from the endoplasmic reticulum membrane. The UREL complex is also involved in reticulophagy in response to endoplasmic reticulum stress by promoting ufmylation of proteins such as CYB5R3 and RPN1, thereby promoting lysosomal degradation of ufmylated proteins. Required for stabilization and ufmylation of ATG9A. This Osmerus mordax (Rainbow smelt) protein is DDRGK domain-containing protein 1.